A 559-amino-acid chain; its full sequence is Cytochrome P450 86B1 (559 aa).

A helical transmembrane segment spans residues 31 to 51 (FLLRDVQILELLIAIFVFVAI). Cysteine 488 lines the heme pocket.

This sequence belongs to the cytochrome P450 family. Heme is required as a cofactor. In terms of tissue distribution, expressed in roots endodermis, anthers, stigmas, stomata of young pedicels of inflorescences, the placenta region of siliques, at the level of the hilum in matures seeds, at the junction of siliques to pedicels where abscission of floral parts takes place and in nectary glands.

The protein resides in the endoplasmic reticulum membrane. Involved in very long chain fatty acids (VLCFA) omega-hydroxylation. Required for the synthesis of saturated VLCFA alpha, omega-bifunctional suberin monomers. This is Cytochrome P450 86B1 (CYP86B1) from Arabidopsis thaliana (Mouse-ear cress).